The sequence spans 156 residues: Cell division protein SepF (156 aa).

The tract at residues 15 to 58 is disordered; the sequence is SDVVPEDEDDEVIDEEPESSFDTDRSVTPIPAASTQPSTSQRKS. Over residues 18–35 the composition is skewed to acidic residues; sequence VPEDEDDEVIDEEPESSF. The segment covering 47–57 has biased composition (polar residues); it reads ASTQPSTSQRK.

Belongs to the SepF family. In terms of assembly, homodimer. Interacts with FtsZ.

The protein localises to the cytoplasm. In terms of biological role, cell division protein that is part of the divisome complex and is recruited early to the Z-ring. Probably stimulates Z-ring formation, perhaps through the cross-linking of FtsZ protofilaments. Its function overlaps with FtsA. The sequence is that of Cell division protein SepF from Bifidobacterium animalis subsp. lactis (strain AD011).